Consider the following 1111-residue polypeptide: Lon protease homolog, mitochondrial (1111 aa).

Residues 1–21 constitute a mitochondrion transit peptide; sequence MLRSSRSRLVTRNILLRQFKN. Disordered stretches follow at residues 85–177 and 288–311; these read IQLK…AKQP and PPTSEQNLKDESDVSKSEGVENNE. Over residues 88 to 125 the composition is skewed to basic and acidic residues; that stretch reads KQDDKGKDIDQPESENRKKEEEQVPTEEKDNDTAKESE. Residues 126–135 show a composition bias toward polar residues; the sequence is TSQQRDSVAE. Positions 145–167 are enriched in gly residues; sequence GASGNGESSGNGSGDDGNNGSGN. Residues 185–450 enclose the Lon N-terminal domain; it reads VMALPISRRP…KALTVLKKEL (266 aa). The span at 294 to 306 shows a compositional bias: basic and acidic residues; sequence NLKDESDVSKSEG. An ATP-binding site is contributed by 602-609; the sequence is GPPGVGKT. Composition is skewed to basic and acidic residues over residues 819–835 and 853–865; these read ENEEVKDQKDIKVKQSE and ELIKTQKSHDNKG. The tract at residues 819–866 is disordered; the sequence is ENEEVKDQKDIKVKQSENKSSAEASTVESTTEENELIKTQKSHDNKGS. A Lon proteolytic domain is found at 899–1085; sequence STPPGVVMGL…EDVFQRLFGD (187 aa). Active-site residues include serine 991 and lysine 1034.

It belongs to the peptidase S16 family. As to quaternary structure, homohexamer or homoheptamer. Organized in a ring with a central cavity.

It localises to the mitochondrion matrix. It catalyses the reaction Hydrolysis of proteins in presence of ATP.. Its function is as follows. ATP-dependent serine protease that mediates the selective degradation of misfolded, unassembled or oxidatively damaged polypeptides as well as certain short-lived regulatory proteins in the mitochondrial matrix. May also have a chaperone function in the assembly of inner membrane protein complexes. Participates in the regulation of mitochondrial gene expression and in the maintenance of the integrity of the mitochondrial genome. Binds to mitochondrial DNA in a site-specific manner. This chain is Lon protease homolog, mitochondrial, found in Kluyveromyces lactis (strain ATCC 8585 / CBS 2359 / DSM 70799 / NBRC 1267 / NRRL Y-1140 / WM37) (Yeast).